The chain runs to 305 residues: tRNA-cytidine(32) 2-sulfurtransferase (305 aa).

The interval 1 to 20 (MTAVLPLPHPLADPAPRDPR) is disordered. Residues 59 to 64 (SGGKDS) carry the PP-loop motif motif. [4Fe-4S] cluster-binding residues include Cys-134, Cys-137, and Cys-225. A compositionally biased stretch (low complexity) spans 282-293 (DAPPDLAPDPGA). The disordered stretch occupies residues 282–305 (DAPPDLAPDPGAWLTASDATHDSD).

The protein belongs to the TtcA family. Homodimer. It depends on Mg(2+) as a cofactor. Requires [4Fe-4S] cluster as cofactor.

It localises to the cytoplasm. The enzyme catalyses cytidine(32) in tRNA + S-sulfanyl-L-cysteinyl-[cysteine desulfurase] + AH2 + ATP = 2-thiocytidine(32) in tRNA + L-cysteinyl-[cysteine desulfurase] + A + AMP + diphosphate + H(+). The protein operates within tRNA modification. Its function is as follows. Catalyzes the ATP-dependent 2-thiolation of cytidine in position 32 of tRNA, to form 2-thiocytidine (s(2)C32). The sulfur atoms are provided by the cysteine/cysteine desulfurase (IscS) system. The chain is tRNA-cytidine(32) 2-sulfurtransferase from Xanthomonas oryzae pv. oryzae (strain PXO99A).